A 591-amino-acid chain; its full sequence is Potassium-transporting ATPase potassium-binding subunit (591 aa).

10 helical membrane-spanning segments follow: residues 6-26 (WFQI…LGVF), 63-83 (WTEY…MLYI), 137-157 (GLAY…IAFI), 179-199 (VLWV…SQGV), 272-292 (LSNL…TYTL), 303-323 (WAVW…VYWA), 405-425 (AGMY…GLMV), 444-464 (AMLV…ISSV), 510-530 (VAIG…MLAI), and 553-573 (LFSV…FFPA).

This sequence belongs to the KdpA family. The system is composed of three essential subunits: KdpA, KdpB and KdpC.

It localises to the cell inner membrane. Part of the high-affinity ATP-driven potassium transport (or Kdp) system, which catalyzes the hydrolysis of ATP coupled with the electrogenic transport of potassium into the cytoplasm. This subunit binds the periplasmic potassium ions and delivers the ions to the membrane domain of KdpB through an intramembrane tunnel. This Koribacter versatilis (strain Ellin345) protein is Potassium-transporting ATPase potassium-binding subunit.